The chain runs to 198 residues: Pyridoxal 5'-phosphate synthase subunit PdxT (198 aa).

Residue 50–52 participates in L-glutamine binding; the sequence is GES. The active-site Nucleophile is the Cys82. L-glutamine contacts are provided by residues Arg114 and 143 to 144; that span reads IR. Residues His179 and Glu181 each act as charge relay system in the active site.

This sequence belongs to the glutaminase PdxT/SNO family. In terms of assembly, in the presence of PdxS, forms a dodecamer of heterodimers. Only shows activity in the heterodimer.

The catalysed reaction is aldehydo-D-ribose 5-phosphate + D-glyceraldehyde 3-phosphate + L-glutamine = pyridoxal 5'-phosphate + L-glutamate + phosphate + 3 H2O + H(+). It catalyses the reaction L-glutamine + H2O = L-glutamate + NH4(+). The protein operates within cofactor biosynthesis; pyridoxal 5'-phosphate biosynthesis. In terms of biological role, catalyzes the hydrolysis of glutamine to glutamate and ammonia as part of the biosynthesis of pyridoxal 5'-phosphate. The resulting ammonia molecule is channeled to the active site of PdxS. The polypeptide is Pyridoxal 5'-phosphate synthase subunit PdxT (Metallosphaera sedula (strain ATCC 51363 / DSM 5348 / JCM 9185 / NBRC 15509 / TH2)).